The following is a 725-amino-acid chain: LPS-assembly protein LptD (725 aa).

An N-terminal signal peptide occupies residues 1–25 (MSLLSKLHLILYICLLLLPLRFVNA).

It belongs to the LptD family. Component of the lipopolysaccharide transport and assembly complex. Interacts with LptE and LptA.

Its subcellular location is the cell outer membrane. Its function is as follows. Together with LptE, is involved in the assembly of lipopolysaccharide (LPS) at the surface of the outer membrane. In Nitrosomonas eutropha (strain DSM 101675 / C91 / Nm57), this protein is LPS-assembly protein LptD.